We begin with the raw amino-acid sequence, 549 residues long: mRNA-capping enzyme subunit beta (549 aa).

S2 is modified (N-acetylserine). Phosphoserine is present on S15. The tract at residues 30–169 (LQKLSEAANG…QGNEGNIASN (140 aa)) is disordered. The segment covering 86–96 (DDEETDTDDEM) has biased composition (acidic residues). S124 is modified (phosphoserine). Residues 135–157 (AKLEKPSDDSIHQNSKSDEEQRI) are compositionally biased toward basic and acidic residues. Catalysis depends on K223, which acts as the N6-GMP-lysine intermediate.

The protein belongs to the fungal TPase family. Heterodimer. The mRNA-capping enzyme is composed of two separate chains alpha and beta, respectively a mRNA guanylyltransferase and an mRNA 5'-triphosphate monophosphatase. Mg(2+) is required as a cofactor.

It is found in the nucleus. The catalysed reaction is a 5'-end triphospho-ribonucleoside in mRNA + H2O = a 5'-end diphospho-ribonucleoside in mRNA + phosphate + H(+). Its function is as follows. First step of mRNA capping. Converts the 5'-triphosphate end of a nascent mRNA chain into a diphosphate end. The protein is mRNA-capping enzyme subunit beta (CET1) of Saccharomyces cerevisiae (strain ATCC 204508 / S288c) (Baker's yeast).